The primary structure comprises 289 residues: Serine/threonine-protein phosphatase Pgam5, mitochondrial (289 aa).

This sequence belongs to the phosphoglycerate mutase family. BPG-dependent PGAM subfamily. In terms of assembly, interacts with Pk92B/ASK1.

The protein localises to the mitochondrion outer membrane. The catalysed reaction is O-phospho-L-seryl-[protein] + H2O = L-seryl-[protein] + phosphate. It carries out the reaction O-phospho-L-threonyl-[protein] + H2O = L-threonyl-[protein] + phosphate. Its function is as follows. Displays phosphatase activity for serine/threonine residues, and dephosphorylates and activates Pk92B kinase. Has apparently no phosphoglycerate mutase activity. This Drosophila yakuba (Fruit fly) protein is Serine/threonine-protein phosphatase Pgam5, mitochondrial.